Here is a 118-residue protein sequence, read N- to C-terminus: UPF0102 protein lpp3065 (118 aa).

This sequence belongs to the UPF0102 family.

This is UPF0102 protein lpp3065 from Legionella pneumophila (strain Paris).